The sequence spans 83 residues: MQVSVLITLAVLGVMFVWTSAAELEERGSDQPAWLKSLERIFQSEERDCRALYGGCTKDEDCCKHLACRRTLPTYCAWDLTFP.

A signal peptide spans 1–21 (MQVSVLITLAVLGVMFVWTSA). Residues 22–47 (AELEERGSDQPAWLKSLERIFQSEER) constitute a propeptide that is removed on maturation. 3 cysteine pairs are disulfide-bonded: Cys49–Cys63, Cys56–Cys68, and Cys62–Cys76.

It belongs to the neurotoxin 10 (Hwtx-1) family. 40 (Jztx-35) subfamily. As to expression, expressed by the venom gland.

It is found in the secreted. Its function is as follows. Probable ion channel inhibitor. This is U20-theraphotoxin-Cg1a 2 from Chilobrachys guangxiensis (Chinese earth tiger tarantula).